Here is a 423-residue protein sequence, read N- to C-terminus: MLFERAKSVFPGGVNSPARALKHLPSPLVAKAASGAYLYTDRGKLVDYCMAFGAIILGHAHPRVKKAVEEQLEKGWIYALLTEQEVEFAERIRRHMPSVEKMRIVNTGTEATMSAIRAARGYTKRDVIIKFEGNFHGSHDYVLVKAGSGAATWGIPTSAGIPQEVARLTVVVPYNDIDAFIKAVREVGDRLAAVIVEPVAGNYGLIIPDVEFLKALREETQRAGALLIFDEVITGFRVGLGGAQGLFGIRPDLTTLGKVVGGGFPIGIFGGRGEVMDLVAPSGPVYNAGTYNAHPVSIAAGLAVLKELETGEPYRIANEAAERLAKGVEDVAGRLGFDVVVKRMASMFQFYFKKGDVKTPQDVRESNEKMYLKLHEIALKHGVYLTPSQYEVNFTSAAHGREVVEETLAALEKSFQELQREIG.

Lysine 258 carries the N6-(pyridoxal phosphate)lysine modification.

The protein belongs to the class-III pyridoxal-phosphate-dependent aminotransferase family. HemL subfamily. It depends on pyridoxal 5'-phosphate as a cofactor.

Its subcellular location is the cytoplasm. The enzyme catalyses (S)-4-amino-5-oxopentanoate = 5-aminolevulinate. The protein operates within porphyrin-containing compound metabolism; protoporphyrin-IX biosynthesis; 5-aminolevulinate from L-glutamyl-tRNA(Glu): step 2/2. In Pyrobaculum aerophilum (strain ATCC 51768 / DSM 7523 / JCM 9630 / CIP 104966 / NBRC 100827 / IM2), this protein is Glutamate-1-semialdehyde 2,1-aminomutase.